Reading from the N-terminus, the 298-residue chain is MFSRASVVGLSACAVQPQWIQVRNMATLKDITRRLKSIKNIQKITKSMKMVAAAKYARAERELKPARVYGTGSLALYEKADIKAPEDKKKHLIIGVSSDRGLCGAIHSSVAKQMKNEVAALTAAGKEVMIVGVGEKIKGILYRTHSDQFLVSFKDVGRKPPTFGDASVIALELLNSGYEFDEGSIIFNQFKSVISYKTEEKPIFSLNTIATAETMSIYDDIDADVLQNYQEYNLANLIYYSLKESTTSEQSARMTAMDNASKNASDMIDKLTLTFNRTRQAVITKELIEIISGAAALD.

Residues 1–25 constitute a mitochondrion transit peptide; sequence MFSRASVVGLSACAVQPQWIQVRNM. Lys39 bears the N6-acetyllysine mark. An N6-succinyllysine modification is found at Lys49. The residue at position 55 (Lys55) is an N6-acetyllysine. The residue at position 115 (Lys115) is an N6-acetyllysine; alternate. The residue at position 115 (Lys115) is an N6-succinyllysine; alternate. Residue Lys138 is modified to N6-acetyllysine. Ser146 carries the phosphoserine modification. Lys154 is subject to N6-acetyllysine; alternate. Lys154 is subject to N6-succinyllysine; alternate. Lys197 carries the post-translational modification N6-acetyllysine. Lys270 bears the N6-succinyllysine mark.

It belongs to the ATPase gamma chain family. Component of the ATP synthase complex composed at least of ATP5F1A/subunit alpha, ATP5F1B/subunit beta, ATP5MC1/subunit c (homooctomer), MT-ATP6/subunit a, MT-ATP8/subunit 8, ATP5ME/subunit e, ATP5MF/subunit f, ATP5MG/subunit g, ATP5MK/subunit k, ATP5MJ/subunit j, ATP5F1C/subunit gamma, ATP5F1D/subunit delta, ATP5F1E/subunit epsilon, ATP5PF/subunit F6, ATP5PB/subunit b, ATP5PD/subunit d, ATP5PO/subunit OSCP. ATP synthase complex consists of a soluble F(1) head domain (subunits alpha(3) and beta(3)) - the catalytic core - and a membrane F(0) domain - the membrane proton channel (subunits c, a, 8, e, f, g, k and j). These two domains are linked by a central stalk (subunits gamma, delta, and epsilon) rotating inside the F1 region and a stationary peripheral stalk (subunits F6, b, d, and OSCP). Interacts with FLVCR2; this interaction occurs in the absence of heme and is disrupted upon heme binding.

Its subcellular location is the mitochondrion inner membrane. Its function is as follows. Subunit gamma, of the mitochondrial membrane ATP synthase complex (F(1)F(0) ATP synthase or Complex V) that produces ATP from ADP in the presence of a proton gradient across the membrane which is generated by electron transport complexes of the respiratory chain. ATP synthase complex consist of a soluble F(1) head domain - the catalytic core - and a membrane F(1) domain - the membrane proton channel. These two domains are linked by a central stalk rotating inside the F(1) region and a stationary peripheral stalk. During catalysis, ATP synthesis in the catalytic domain of F(1) is coupled via a rotary mechanism of the central stalk subunits to proton translocation. In vivo, can only synthesize ATP although its ATP hydrolase activity can be activated artificially in vitro. With the central stalk subunit delta, is essential for the biogenesis of F(1) catalytic part of the ATP synthase complex namely in the formation of F1 assembly intermediate. This is ATP synthase F(1) complex subunit gamma, mitochondrial from Mus musculus (Mouse).